A 221-amino-acid polypeptide reads, in one-letter code: Cytidylate kinase 1 (221 aa).

7–15 (GPSASGKSS) is a binding site for ATP.

It belongs to the cytidylate kinase family. Type 1 subfamily.

Its subcellular location is the cytoplasm. It carries out the reaction CMP + ATP = CDP + ADP. It catalyses the reaction dCMP + ATP = dCDP + ADP. This Borreliella burgdorferi (strain ATCC 35210 / DSM 4680 / CIP 102532 / B31) (Borrelia burgdorferi) protein is Cytidylate kinase 1.